Reading from the N-terminus, the 315-residue chain is MSESLRIIFAGTPDFAARHLDALLSSGHNIVGVFTQPDRPAGRGKKLMPSPVKVLAEDKGLPVFQPVSLRPQENQQRVADLQADVMVVVAYGLILPKAVLEMPRLGCINVHGSLLPRWRGAAPIQRSLWAGDAETGVTIMQMDVGLDTGDMLYKLSCPITAEDTSGTLYDKLAELGPQGLITTLKQLADGTAKPEVQDETLVTYAEKLSKEEARIDWSLSAAQLERCIRAFNPWPMSWLEIEGQPVKVWKASVIDTTTKAAPGTILEANKQGIQVATGDGILNLLSMQPAGKKAMSVQDLLNSRREWFVPGNRLA.

The interval 2-189 (SESLRIIFAG…LITTLKQLAD (188 aa)) is N-terminal domain. 113 to 116 (SLLP) is a binding site for (6S)-5,6,7,8-tetrahydrofolate. The segment at 210–315 (KEEARIDWSL…EWFVPGNRLA (106 aa)) is C-terminal domain.

Belongs to the Fmt family.

It catalyses the reaction L-methionyl-tRNA(fMet) + (6R)-10-formyltetrahydrofolate = N-formyl-L-methionyl-tRNA(fMet) + (6S)-5,6,7,8-tetrahydrofolate + H(+). Attaches a formyl group to the free amino group of methionyl-tRNA(fMet). The formyl group appears to play a dual role in the initiator identity of N-formylmethionyl-tRNA by promoting its recognition by IF2 and preventing the misappropriation of this tRNA by the elongation apparatus. This chain is Methionyl-tRNA formyltransferase, found in Escherichia coli O6:H1 (strain CFT073 / ATCC 700928 / UPEC).